Consider the following 1595-residue polypeptide: A disintegrin and metalloproteinase with thrombospondin motifs 7 (1595 aa).

Residues 1–20 form the signal peptide; it reads MHRGLNLLLILCALAPHVLG. Residues 21 to 217 constitute a propeptide that is removed on maturation; sequence PASGLPTEGR…QRQQKRRQQR (197 aa). N-linked (GlcNAc...) asparagine glycans are attached at residues Asn-84 and Asn-105. Residues 165 to 218 form a disordered region; it reads PGHAQPHMVYKHKRSGQQDDSRTSGTCGVQGSPELKHQREHWEQRQQKRRQQRS. The short motif at 189–196 is the Cysteine switch element; sequence GTCGVQGS. Cys-191 serves as a coordination point for Zn(2+). The segment covering 198–210 has biased composition (basic and acidic residues); sequence ELKHQREHWEQRQ. The region spanning 223–434 is the Peptidase M12B domain; the sequence is KWVETLVVAD…GWGLCLDDRP (212 aa). 11 disulfides stabilise this stretch: Cys-299–Cys-353, Cys-328–Cys-335, Cys-347–Cys-429, Cys-386–Cys-413, Cys-456–Cys-479, Cys-467–Cys-485, Cys-474–Cys-504, Cys-498–Cys-509, Cys-532–Cys-569, Cys-536–Cys-574, and Cys-547–Cys-559. His-369 serves as a coordination point for Zn(2+). The active site involves Glu-370. Zn(2+)-binding residues include His-373 and His-379. The Disintegrin domain maps to 444 to 519; it reads VLPGVLYDVN…VPEGFQPETV (76 aa). In terms of domain architecture, TSP type-1 1 spans 520–575; that stretch reads DGGWSGWSAWSVCSRSCGVGVRSSERQCTQPVPKNKGKYCVGERKRYRLCNLQACP. Asn-619 carries an N-linked (GlcNAc...) asparagine glycan. A spacer region spans residues 680 to 791; sequence HTVSRTFKEA…PGVHYKYTIQ (112 aa). TSP type-1 domains lie at 801–860, 861–917, and 922–975; these read PEFS…EPCP, ARWW…IPCY, and CPSS…QPCQ. Disordered regions lie at residues 989–1035, 1077–1121, 1179–1234, and 1255–1315; these read GSSS…LDPP, PPHI…SHSP, REDT…LSPD, and KPVH…APTD. Composition is skewed to pro residues over residues 1005-1015 and 1079-1089; these read QPVPRPSPASS and HIRPTEPPSDS. The segment covering 1220 to 1232 has biased composition (low complexity); sequence SSPSNSTTQASLS. Residues 1268–1280 are compositionally biased toward polar residues; it reads QIQTPHTEGTQSP. 4 consecutive TSP type-1 domains span residues 1320-1368, 1371-1431, 1433-1476, and 1478-1538; these read KNAS…RHCH, PCAA…QPCL, WYTS…PCNT, and PCTQ…EDCE. In terms of domain architecture, PLAC spans 1541–1581; it reads EPSRCERDRLPFNFCETLRLLGRCQLPTIRAQCCRSCPPLS.

Interacts with COMP. The cofactor is Zn(2+). Post-translationally, glycosylated. Can be O-fucosylated by POFUT2 on a serine or a threonine residue found within the consensus sequence C1-X(2)-(S/T)-C2-G of the TSP type-1 repeat domains where C1 and C2 are the first and second cysteine residue of the repeat, respectively. Fucosylated repeats can then be further glycosylated by the addition of a beta-1,3-glucose residue by the glucosyltransferase, B3GALTL. Fucosylation mediates the efficient secretion of ADAMTS family members. Can also be C-glycosylated with one or two mannose molecules on tryptophan residues within the consensus sequence W-X-X-W of the TPRs. N- and C-glycosylations can also facilitate secretion. In terms of processing, O-glycosylated proteoglycan; contains chondroitin sulfate. May be cleaved by a furin endopeptidase. The precursor is sequentially processed. In terms of tissue distribution, detected in liver, ovary, kidney, testicle, lung and embryo.

Its subcellular location is the secreted. The protein localises to the extracellular space. It localises to the extracellular matrix. Its function is as follows. Metalloprotease. Was previously shown to degrade COMP. However, a later study found no activity against COMP. This is A disintegrin and metalloproteinase with thrombospondin motifs 7 (Adamts7) from Rattus norvegicus (Rat).